The following is a 467-amino-acid chain: GTPase Der (467 aa).

EngA-type G domains lie at 25 to 188 and 199 to 372; these read PVVA…PEAP and RRVA…ASWE. Residues 31–38, 78–82, 140–143, 205–212, 252–256, and 317–320 contribute to the GTP site; these read GRPNVGKS, DTGGW, NKAD, DTAGL, and NKWD. The KH-like domain maps to 373-455; sequence TRVPTAQLNA…PIEIAVRPRK (83 aa).

It belongs to the TRAFAC class TrmE-Era-EngA-EngB-Septin-like GTPase superfamily. EngA (Der) GTPase family. In terms of assembly, associates with the 50S ribosomal subunit.

In terms of biological role, GTPase that plays an essential role in the late steps of ribosome biogenesis. In Salinispora arenicola (strain CNS-205), this protein is GTPase Der.